Here is a 267-residue protein sequence, read N- to C-terminus: GTP cyclohydrolase FolE2 (267 aa).

It belongs to the GTP cyclohydrolase IV family.

It carries out the reaction GTP + H2O = 7,8-dihydroneopterin 3'-triphosphate + formate + H(+). It functions in the pathway cofactor biosynthesis; 7,8-dihydroneopterin triphosphate biosynthesis; 7,8-dihydroneopterin triphosphate from GTP: step 1/1. Functionally, converts GTP to 7,8-dihydroneopterin triphosphate. This is GTP cyclohydrolase FolE2 from Citrifermentans bemidjiense (strain ATCC BAA-1014 / DSM 16622 / JCM 12645 / Bem) (Geobacter bemidjiensis).